The sequence spans 189 residues: GTP cyclohydrolase 1 (189 aa).

Zn(2+) contacts are provided by Cys79, His82, and Cys150.

The protein belongs to the GTP cyclohydrolase I family. As to quaternary structure, toroid-shaped homodecamer, composed of two pentamers of five dimers.

It carries out the reaction GTP + H2O = 7,8-dihydroneopterin 3'-triphosphate + formate + H(+). Its pathway is cofactor biosynthesis; 7,8-dihydroneopterin triphosphate biosynthesis; 7,8-dihydroneopterin triphosphate from GTP: step 1/1. This chain is GTP cyclohydrolase 1, found in Rickettsia massiliae (strain Mtu5).